A 92-amino-acid chain; its full sequence is Small ribosomal subunit protein uS19c (92 aa).

This sequence belongs to the universal ribosomal protein uS19 family.

It localises to the plastid. Its subcellular location is the chloroplast. Functionally, protein S19 forms a complex with S13 that binds strongly to the 16S ribosomal RNA. The polypeptide is Small ribosomal subunit protein uS19c (Vitis vinifera (Grape)).